A 144-amino-acid polypeptide reads, in one-letter code: NADH-ubiquinone oxidoreductase chain 6 (144 aa).

Transmembrane regions (helical) follow at residues 1–21 (MVKV…INID), 25–45 (SSFF…MSMH), 46–66 (IWFS…ILVY), 79–99 (YMAV…VLTY), and 108–128 (FYYS…LFFM).

Belongs to the complex I subunit 6 family.

It localises to the mitochondrion membrane. The catalysed reaction is a ubiquinone + NADH + 5 H(+)(in) = a ubiquinol + NAD(+) + 4 H(+)(out). Core subunit of the mitochondrial membrane respiratory chain NADH dehydrogenase (Complex I) that is believed to belong to the minimal assembly required for catalysis. Complex I functions in the transfer of electrons from NADH to the respiratory chain. The immediate electron acceptor for the enzyme is believed to be ubiquinone. This Caenorhabditis elegans protein is NADH-ubiquinone oxidoreductase chain 6.